Here is a 76-residue protein sequence, read N- to C-terminus: Accessory gland-specific peptide 57Dc (76 aa).

An N-terminal signal peptide occupies residues 1-20 (MHGTHFLILLLLCGVLGSNG).

Post-translationally, cAMP-dependent phosphorylation. Lumen fluid of male accessory glands, becomes seminal fluid.

The protein resides in the secreted. Transferred from male to female during mating and may affect egglaying and behavior after mating. The sequence is that of Accessory gland-specific peptide 57Dc (Mst57Dc) from Drosophila melanogaster (Fruit fly).